The following is a 712-amino-acid chain: Glycine--tRNA ligase beta subunit (712 aa).

Belongs to the class-II aminoacyl-tRNA synthetase family. In terms of assembly, tetramer of two alpha and two beta subunits.

The protein localises to the cytoplasm. It catalyses the reaction tRNA(Gly) + glycine + ATP = glycyl-tRNA(Gly) + AMP + diphosphate. The sequence is that of Glycine--tRNA ligase beta subunit from Dechloromonas aromatica (strain RCB).